Here is a 178-residue protein sequence, read N- to C-terminus: Cytidylate kinase (178 aa).

7-15 (GLPGTGTTT) contributes to the ATP binding site.

This sequence belongs to the cytidylate kinase family. Type 2 subfamily.

The protein resides in the cytoplasm. It carries out the reaction CMP + ATP = CDP + ADP. The catalysed reaction is dCMP + ATP = dCDP + ADP. The protein is Cytidylate kinase (cmk) of Methanocaldococcus jannaschii (strain ATCC 43067 / DSM 2661 / JAL-1 / JCM 10045 / NBRC 100440) (Methanococcus jannaschii).